Consider the following 113-residue polypeptide: Protein translation factor SUI1 homolog (113 aa).

The disordered stretch occupies residues 1-24 (MSELDSQVPTAFDPFADANAEDSG). At serine 2 the chain carries N-acetylserine.

Belongs to the SUI1 family.

Functionally, probably involved in translation. The protein is Protein translation factor SUI1 homolog of Brassica oleracea (Wild cabbage).